The chain runs to 414 residues: DNA polymerase processivity factor (414 aa).

The segment at 327-414 is disordered; that stretch reads SESCSLDPPR…SLKLTFNPLI (88 aa). The segment covering 389–405 has biased composition (basic residues); sequence SEKRKREGGKKGPKAKS.

This sequence belongs to the herpesviridae DNA polymerase accessory subunit family.

In terms of biological role, increases the processivity of the viral polymerase, probably by acting as a sliding clamp that prevents dissociation of the polymerase from the active template. This Equine herpesvirus 2 (strain 86/87) (EHV-2) protein is DNA polymerase processivity factor (59).